The sequence spans 103 residues: ATP synthase subunit H, mitochondrial (103 aa).

Residues 1-26 constitute a mitochondrion transit peptide; that stretch reads MSRILKSLSRSYSTTSPRLYVDVVQG.

It belongs to the ATPase h subunit family. As to quaternary structure, F-type ATPases have 2 components, CF(1) - the catalytic core - and CF(0) - the membrane proton channel.

The protein localises to the mitochondrion. Its subcellular location is the mitochondrion inner membrane. Its function is as follows. Mitochondrial membrane ATP synthase (F(1)F(0) ATP synthase or Complex V) produces ATP from ADP in the presence of a proton gradient across the membrane which is generated by electron transport complexes of the respiratory chain. F-type ATPases consist of two structural domains, F(1) - containing the extramembraneous catalytic core and F(0) - containing the membrane proton channel, linked together by a central stalk and a peripheral stalk. During catalysis, ATP synthesis in the catalytic domain of F(1) is coupled via a rotary mechanism of the central stalk subunits to proton translocation. Part of the complex F(0) domain. Minor subunit located with subunit a in the membrane. The sequence is that of ATP synthase subunit H, mitochondrial (atp14) from Schizosaccharomyces pombe (strain 972 / ATCC 24843) (Fission yeast).